A 122-amino-acid polypeptide reads, in one-letter code: Large ribosomal subunit protein uL14 (122 aa).

It belongs to the universal ribosomal protein uL14 family. Part of the 50S ribosomal subunit. Forms a cluster with proteins L3 and L19. In the 70S ribosome, L14 and L19 interact and together make contacts with the 16S rRNA in bridges B5 and B8.

Functionally, binds to 23S rRNA. Forms part of two intersubunit bridges in the 70S ribosome. In Campylobacter jejuni subsp. jejuni serotype O:6 (strain 81116 / NCTC 11828), this protein is Large ribosomal subunit protein uL14.